The sequence spans 217 residues: Nucleoside diphosphate-linked moiety X motif 6 (217 aa).

The 136-residue stretch at 42-177 folds into the Nudix hydrolase domain; the sequence is THQVGVAGAV…VAKLLLYGYN (136 aa). The Nudix box signature appears at 77-98; it reads GLSDQGEDIGATAVREVLEETG.

This sequence belongs to the Nudix hydrolase family. In terms of tissue distribution, detected in liver (at protein level).

It is found in the cytoplasm. Its subcellular location is the nucleus. The protein localises to the mitochondrion. Functionally, may contribute to the regulation of cell proliferation. The sequence is that of Nucleoside diphosphate-linked moiety X motif 6 (nudt6) from Xenopus laevis (African clawed frog).